The sequence spans 424 residues: MTIKANYDSAKQAYEKWGIDVEEALRQLEQVPISIHCWQGDDIEGFEVNKGELSGGIDVTGNYPGKAQTPEELRRDLEKALSLIPGKHRVNLHAIYAETNREAVERDELKPQHFENWVKWAKNLGLGLDFNPTLFSHEKAADGLTLSHPDPDIREFWIRHCIACRRIGEYFGKELGTPCLTNIWIPDGYKDIPSDRLTPRKRLKESLDRIFSEEISEQHNLDSIESKLFGLGSESYVVGSHEFYLAYALTNHKLCLLDTGHFHPTETVSNKISSMLLYTDKLALHVSRPVRWDSDHVVVLDDELREIALEIVRNHALEKVAIGLDFFDASINRVAAWTIGTRNMIKALLYALLLPNGYLKQLQEEGRYTERLALMEEFKTYPFGAIWDSYCEQMGVPVKEAWLYDIKEYEQQVLLKRKASSPIV.

Mn(2+) contacts are provided by His261, Asp293, and Asp295.

Belongs to the rhamnose isomerase family. The cofactor is Mn(2+).

It is found in the cytoplasm. It catalyses the reaction L-rhamnopyranose = L-rhamnulose. It participates in carbohydrate degradation; L-rhamnose degradation; glycerone phosphate from L-rhamnose: step 1/3. Catalyzes the interconversion of L-rhamnose and L-rhamnulose. The sequence is that of L-rhamnose isomerase from Bacillus subtilis (strain 168).